A 300-amino-acid chain; its full sequence is Protein orai (300 aa).

At 1 to 128 (MPRSHDPSRV…SKAQLKASSR (128 aa)) the chain is on the cytoplasmic side. The interval 58-82 (QPPSSGGGSRNVGGGDGAAGNSKNG) is disordered. Over residues 62 to 75 (SGGGSRNVGGGDGA) the composition is skewed to gly residues. A helical transmembrane segment spans residues 129–146 (TSALLAGFAMVCLVELQY). Over 147-153 (DDSTSKP) the chain is Extracellular. A helical transmembrane segment spans residues 154–174 (LLIVLGVVTSLLVSVHLLALM). Residues 175-205 (MSTCILPYMEATGCTQDSPHLKLKFYIDLSW) are Cytoplasmic-facing. Residues 206 to 226 (LFSTCIGLLLFLVEIGVIFYV) form a helical membrane-spanning segment. The Extracellular segment spans residues 227 to 237 (KFTAVGYPTAG). The helical transmembrane segment at 238-258 (YITTAMLIPVGIVFVLFSYLI) threads the bilayer. Residues 259-300 (HKNRVSHSLGRFKDKVDTMKQFLDVEANLQKSTIAPSTIRDI) lie on the Cytoplasmic side of the membrane.

It belongs to the Orai family.

It is found in the membrane. Its function is as follows. Ca(2+) release-activated Ca(2+)-like (CRAC-like) channel subunit which mediates Ca(2+) influx and increase in Ca(2+)-selective current by synergy with the Ca(2+) sensor, stim-1. Required for Ca(2+) and IP3-dependent contractile activity of sheath cells and the spermatheca. Affects brood size and somatic cell function. The polypeptide is Protein orai (orai-1) (Caenorhabditis briggsae).